A 629-amino-acid chain; its full sequence is Hemocyanin C chain (629 aa).

Cu cation is bound by residues His175, His179, His206, His326, His330, and His366. A glycan (N-linked (GlcNAc...) asparagine) is linked at Asn451. Cys537 and Cys585 are disulfide-bonded. A glycan (N-linked (GlcNAc...) asparagine) is linked at Asn618.

It belongs to the tyrosinase family. Hemocyanin subfamily. Tarantula hemocyanin is a 24-chain polymer with seven different chains identified. In terms of tissue distribution, hemolymph.

It is found in the secreted. The protein resides in the extracellular space. In terms of biological role, hemocyanins are copper-containing oxygen carriers occurring freely dissolved in the hemolymph of many mollusks and arthropods. The sequence is that of Hemocyanin C chain (HCC) from Aphonopelma sp. (American tarantula).